A 139-amino-acid polypeptide reads, in one-letter code: MSKKTIYFLCTGNSCRSQMAEGWAKKHLGDEWNVYSAGIEAHGLNPNAVKAMREAGIDISEQTSDIIDPDILHNADLVITLCGDAADKCPMTPPHVKREHWGFDDPAKAEGTEEEKWAFFQRVRDEIGERIKRFAETGE.

Catalysis depends on nucleophile residues Cys10, Cys82, and Cys89. 2 cysteine pairs are disulfide-bonded: Cys10–Cys82 and Cys82–Cys89.

This sequence belongs to the low molecular weight phosphotyrosine protein phosphatase family. Thioredoxin-coupled ArsC subfamily.

The protein localises to the cytoplasm. The catalysed reaction is arsenate + [thioredoxin]-dithiol + H(+) = arsenite + [thioredoxin]-disulfide + H2O. Catalyzes the reduction of arsenate [As(V)] to arsenite [As(III)]. In Bacillus licheniformis (strain ATCC 14580 / DSM 13 / JCM 2505 / CCUG 7422 / NBRC 12200 / NCIMB 9375 / NCTC 10341 / NRRL NRS-1264 / Gibson 46), this protein is Arsenate reductase.